Reading from the N-terminus, the 543-residue chain is MAKNIQFDIEARDKLKKGVDALANAVKVTLGPKGRNVVLQKSFGGPQVTKDGVSVAKEIELEDPIENLGAQMVKEVASKTNDIAGDGTTTATVLAQAIVREGLKNVAAGANPMDLKRGIDKAVEAVVNDLKKQSREVGGSNEKIKQVASISANNDEAIGELISVAFDKVGKEGVITVEEAKGIETTVDVVEGMQFDRGYQSPYFVTNSDKMITEFDNPYILLSDKKISSMKDLLPILEPVAQSGKPLLIISEEVEGEALATLVVNKIRGALKVAAVKAPGFGDRRKAMLEDIAILTGGTVISEETGSKLEDTKLSFLGKAERVTIDKDNTTIVNGNGKKSDIESRVNQIKAQIEKTTSDYDKEKLQERLAKLAGGVAVLYVGAASEVEMKEKKDRVDDALHATRAAVEEGIVAGGGVALVRAIKSLNGLKVDNVDQDTGIKIVKRSLQEPLRQIVANAGEEGSVIVAKVAEGKNEFGYDAKLGEYKNMISEGIIDPTKVTRVALENAASVSGMLLTTECVITEIKKEEPAMPQMPNSGMGGMM.

ATP is bound by residues T29–P32, K50, D86–T90, G415, and D495.

Belongs to the chaperonin (HSP60) family. As to quaternary structure, forms a cylinder of 14 subunits composed of two heptameric rings stacked back-to-back. Interacts with the co-chaperonin GroES.

Its subcellular location is the cytoplasm. It carries out the reaction ATP + H2O + a folded polypeptide = ADP + phosphate + an unfolded polypeptide.. In terms of biological role, together with its co-chaperonin GroES, plays an essential role in assisting protein folding. The GroEL-GroES system forms a nano-cage that allows encapsulation of the non-native substrate proteins and provides a physical environment optimized to promote and accelerate protein folding. In Karelsulcia muelleri (strain GWSS) (Sulcia muelleri), this protein is Chaperonin GroEL.